A 284-amino-acid polypeptide reads, in one-letter code: Formamidopyrimidine-DNA glycosylase (284 aa).

P2 acts as the Schiff-base intermediate with DNA in catalysis. E3 (proton donor) is an active-site residue. Residue K61 is the Proton donor; for beta-elimination activity of the active site. DNA-binding residues include H95, R115, and R157. Residues 243–277 (AVYGRAGQPCRRCGTAIVREPFMNRSSFRCPACQP) form an FPG-type zinc finger. R267 (proton donor; for delta-elimination activity) is an active-site residue.

The protein belongs to the FPG family. As to quaternary structure, monomer. Requires Zn(2+) as cofactor.

The catalysed reaction is Hydrolysis of DNA containing ring-opened 7-methylguanine residues, releasing 2,6-diamino-4-hydroxy-5-(N-methyl)formamidopyrimidine.. It carries out the reaction 2'-deoxyribonucleotide-(2'-deoxyribose 5'-phosphate)-2'-deoxyribonucleotide-DNA = a 3'-end 2'-deoxyribonucleotide-(2,3-dehydro-2,3-deoxyribose 5'-phosphate)-DNA + a 5'-end 5'-phospho-2'-deoxyribonucleoside-DNA + H(+). In terms of biological role, involved in base excision repair of DNA damaged by oxidation or by mutagenic agents. Acts as a DNA glycosylase that recognizes and removes damaged bases. Has a preference for oxidized purines, such as 7,8-dihydro-8-oxoguanine (8-oxoG). Has AP (apurinic/apyrimidinic) lyase activity and introduces nicks in the DNA strand. Cleaves the DNA backbone by beta-delta elimination to generate a single-strand break at the site of the removed base with both 3'- and 5'-phosphates. This is Formamidopyrimidine-DNA glycosylase from Acidothermus cellulolyticus (strain ATCC 43068 / DSM 8971 / 11B).